Reading from the N-terminus, the 166-residue chain is Large ribosomal subunit protein bL19 (166 aa).

This sequence belongs to the bacterial ribosomal protein bL19 family. In terms of assembly, part of the 50S ribosomal subunit. Forms a cluster with proteins L3 and L14.

In terms of biological role, this protein is located at the 30S-50S ribosomal subunit interface and may play a role in the structure and function of the aminoacyl-tRNA binding site. Binds the 23S rRNA. The chain is Large ribosomal subunit protein bL19 (rplS) from Deinococcus radiodurans (strain ATCC 13939 / DSM 20539 / JCM 16871 / CCUG 27074 / LMG 4051 / NBRC 15346 / NCIMB 9279 / VKM B-1422 / R1).